The sequence spans 750 residues: Photosystem I P700 chlorophyll a apoprotein A1 (750 aa).

Transmembrane regions (helical) follow at residues 70-93 (VFSA…FHGA), 156-179 (LYCT…FHYH), 195-219 (LNHH…HVSL), 291-309 (IAHH…GHMY), 346-369 (WHAQ…HHMY), 385-411 (LSLF…IFMV), 433-455 (AIIS…LYIH), and 531-549 (FLVH…LILL). 2 residues coordinate [4Fe-4S] cluster: cysteine 573 and cysteine 582. The next 2 helical transmembrane spans lie at 589–610 (HVFL…HFSW) and 664–686 (LSAY…MFLF). Residue histidine 675 participates in chlorophyll a' binding. Chlorophyll a-binding residues include methionine 683 and tyrosine 691. Residue tryptophan 692 participates in phylloquinone binding. A helical membrane pass occupies residues 724–744 (AVGVTHYLLGGIATTWAFFLA).

It belongs to the PsaA/PsaB family. The PsaA/B heterodimer binds the P700 chlorophyll special pair and subsequent electron acceptors. PSI consists of a core antenna complex that captures photons, and an electron transfer chain that converts photonic excitation into a charge separation. The eukaryotic PSI reaction center is composed of at least 11 subunits. The cofactor is P700 is a chlorophyll a/chlorophyll a' dimer, A0 is one or more chlorophyll a, A1 is one or both phylloquinones and FX is a shared 4Fe-4S iron-sulfur center..

The protein localises to the plastid. It localises to the chloroplast thylakoid membrane. It carries out the reaction reduced [plastocyanin] + hnu + oxidized [2Fe-2S]-[ferredoxin] = oxidized [plastocyanin] + reduced [2Fe-2S]-[ferredoxin]. Its function is as follows. PsaA and PsaB bind P700, the primary electron donor of photosystem I (PSI), as well as the electron acceptors A0, A1 and FX. PSI is a plastocyanin-ferredoxin oxidoreductase, converting photonic excitation into a charge separation, which transfers an electron from the donor P700 chlorophyll pair to the spectroscopically characterized acceptors A0, A1, FX, FA and FB in turn. Oxidized P700 is reduced on the lumenal side of the thylakoid membrane by plastocyanin. This is Photosystem I P700 chlorophyll a apoprotein A1 from Calycanthus floridus var. glaucus (Eastern sweetshrub).